A 266-amino-acid chain; its full sequence is Trehalose-6-phosphate phosphatase (266 aa).

The active-site Nucleophile is Asp20. Residues Asp20, Asp22, and Asp198 each contribute to the Mg(2+) site. A substrate-binding site is contributed by 20–22 (DLD).

The protein belongs to the trehalose phosphatase family. Mg(2+) is required as a cofactor. Mn(2+) serves as cofactor. The cofactor is Co(2+). Requires Zn(2+) as cofactor.

It carries out the reaction alpha,alpha-trehalose 6-phosphate + H2O = alpha,alpha-trehalose + phosphate. The protein operates within glycan biosynthesis; trehalose biosynthesis. Functionally, removes the phosphate from trehalose 6-phosphate (Tre6P) to produce free trehalose. Also catalyzes the dephosphorylation of glucose-6-phosphate (Glu6P) and 2-deoxyglucose-6-phosphate (2dGlu6P). This is Trehalose-6-phosphate phosphatase (otsB) from Escherichia coli (strain K12).